The following is a 1025-amino-acid chain: Multidrug resistance protein MdtC (1025 aa).

12 helical membrane-spanning segments follow: residues Phe-3–Leu-23, Glu-333–Leu-353, Ile-360–Cys-380, Leu-387–Leu-407, Val-431–Leu-451, Phe-463–Pro-483, Leu-528–Pro-548, Val-853–Ser-873, Val-875–Leu-895, Leu-897–Val-917, Pro-953–Gly-973, and Ile-984–Val-1004.

The protein belongs to the resistance-nodulation-cell division (RND) (TC 2.A.6) family. MdtC subfamily. Part of a tripartite efflux system composed of MdtA, MdtB and MdtC. MdtC forms a heteromultimer with MdtB.

It is found in the cell inner membrane. Functionally, the MdtABC tripartite complex confers resistance against novobiocin and deoxycholate. The sequence is that of Multidrug resistance protein MdtC from Escherichia coli (strain ATCC 8739 / DSM 1576 / NBRC 3972 / NCIMB 8545 / WDCM 00012 / Crooks).